The primary structure comprises 339 residues: Tetraacyldisaccharide 4'-kinase (339 aa).

58–65 serves as a coordination point for ATP; it reads TVGGSGKT.

It belongs to the LpxK family.

The enzyme catalyses a lipid A disaccharide + ATP = a lipid IVA + ADP + H(+). Its pathway is glycolipid biosynthesis; lipid IV(A) biosynthesis; lipid IV(A) from (3R)-3-hydroxytetradecanoyl-[acyl-carrier-protein] and UDP-N-acetyl-alpha-D-glucosamine: step 6/6. Functionally, transfers the gamma-phosphate of ATP to the 4'-position of a tetraacyldisaccharide 1-phosphate intermediate (termed DS-1-P) to form tetraacyldisaccharide 1,4'-bis-phosphate (lipid IVA). In Shewanella baltica (strain OS155 / ATCC BAA-1091), this protein is Tetraacyldisaccharide 4'-kinase.